The chain runs to 958 residues: Glycine dehydrogenase (decarboxylating) (958 aa).

N6-(pyridoxal phosphate)lysine is present on Lys707.

The protein belongs to the GcvP family. As to quaternary structure, the glycine cleavage system is composed of four proteins: P, T, L and H. It depends on pyridoxal 5'-phosphate as a cofactor.

It catalyses the reaction N(6)-[(R)-lipoyl]-L-lysyl-[glycine-cleavage complex H protein] + glycine + H(+) = N(6)-[(R)-S(8)-aminomethyldihydrolipoyl]-L-lysyl-[glycine-cleavage complex H protein] + CO2. Functionally, the glycine cleavage system catalyzes the degradation of glycine. The P protein binds the alpha-amino group of glycine through its pyridoxal phosphate cofactor; CO(2) is released and the remaining methylamine moiety is then transferred to the lipoamide cofactor of the H protein. This is Glycine dehydrogenase (decarboxylating) from Stutzerimonas stutzeri (strain A1501) (Pseudomonas stutzeri).